The chain runs to 245 residues: Membrane-associated progesterone-binding protein 4 (245 aa).

The chain crosses the membrane as a helical span at residues 6–26; it reads RFLLSPFVGVTFIVVLVSLYF. The Cytochrome b5 heme-binding domain occupies 39–138; that stretch reads KRLFSAEELA…RTYTPVGKLV (100 aa). Residues 45 to 138 form a steroid-binding region; sequence EELALYNGTD…RTYTPVGKLV (94 aa).

Belongs to the cytochrome b5 family. MAPR subfamily.

It is found in the membrane. In Arabidopsis thaliana (Mouse-ear cress), this protein is Membrane-associated progesterone-binding protein 4.